Here is a 178-residue protein sequence, read N- to C-terminus: HTH-type transcriptional regulator SutR (178 aa).

Residues 12-66 (LKQLRQQRGWSLSRLAEATGVSKAMLGQIERNESSPTVATLWKIATGLNVPFSTF) form the HTH cro/C1-type domain. The segment at residues 23–42 (LSRLAEATGVSKAMLGQIER) is a DNA-binding region (H-T-H motif). The 67-residue stretch at 105-171 (QMASGAISES…GGEQTVHFHS (67 aa)) folds into the Cupin type-2 domain.

Functionally, regulates the expression of 12-16 transcription units involved in various steps of sulfur utilization. Represses expression of pfkB, fliZ, cysE, ydcO and its own expression. Activates expression of ypfN. Acts by binding to SutR boxes. The protein is HTH-type transcriptional regulator SutR of Escherichia coli (strain K12).